Reading from the N-terminus, the 479-residue chain is Anaerobic nitric oxide reductase flavorubredoxin (479 aa).

Residues 30–210 (LRGSSYNSYL…PFSRLVTPKI (181 aa)) form a zinc metallo-hydrolase region. Histidine 79, glutamate 81, aspartate 83, histidine 147, aspartate 166, and histidine 227 together coordinate Fe cation. The Flavodoxin-like domain occupies 254–393 (ITIFYDTMSN…LCREHGREIA (140 aa)). Residues 260 to 264 (TMSNN) and 342 to 369 (AFGSHGWSGGAMDRLSTRLQDAGFEMSL) each bind FMN. The region spanning 423-474 (GPRMQCSVCQWIYDPAKGEPMQDVAPGTPWSEVPDNFLCPECSLGKDVFDEL) is the Rubredoxin-like domain. 4 residues coordinate Fe cation: cysteine 428, cysteine 431, cysteine 461, and cysteine 464.

It in the N-terminal section; belongs to the zinc metallo-hydrolase group 3 family. Homotetramer. It depends on Fe cation as a cofactor. Requires FMN as cofactor.

It localises to the cytoplasm. It participates in nitrogen metabolism; nitric oxide reduction. Functionally, anaerobic nitric oxide reductase; uses NADH to detoxify nitric oxide (NO), protecting several 4Fe-4S NO-sensitive enzymes. Has at least 2 reductase partners, only one of which (NorW, flavorubredoxin reductase) has been identified. NO probably binds to the di-iron center; electrons enter from the NorW at rubredoxin and are transferred sequentially to the FMN center and the di-iron center. Also able to function as an aerobic oxygen reductase. The sequence is that of Anaerobic nitric oxide reductase flavorubredoxin from Shigella flexneri serotype 5b (strain 8401).